Reading from the N-terminus, the 1773-residue chain is ATP-binding cassette sub-family A member 17 (1773 aa).

A run of 3 helical transmembrane segments spans residues 22 to 42, 262 to 282, and 306 to 326; these read TLVTVLETLMPVLFSAIVLYL, FPLLLMLSFICVELIITNSIL, and AWFITFFLSALVTVSGMTVLF. N-linked (GlcNAc...) asparagine glycosylation is present at asparagine 340. 4 consecutive transmembrane segments (helical) span residues 342–362, 372–392, 403–423, and 444–464; these read TLIFIFLMCFAIATIFFAFMM, GTVIGGIVFFFTYLPYMYITF, ILSCLFSNVAMAMGVRFISLF, and FTQVLVMLLLDSFLYCLVAFL. The ABC transporter 1 domain occupies 525–758; the sequence is IEIQHLYKVF…YGAGYYMTII (234 aa). Residue 561-568 participates in ATP binding; the sequence is GHNGAGKT. Asparagine 615 carries an N-linked (GlcNAc...) asparagine glycan. Transmembrane regions (helical) follow at residues 912–932, 1088–1108, 1134–1154, 1166–1186, 1198–1218, 1236–1256, and 1293–1313; these read LVLSVQILLPLVIIMLSLSFF, LVVNFLFGIAFLSSSFSILTV, LLWDLISFLVPTLLLVLVFFW, IPAVVLIMMLYGWAIIPLVYT, CVKLVAMLTFLSISPVVLVTV, IFLIFPGHCLGMAFSNLYYNF, and IGKYLTALAILGPVYITLLFL. Residue asparagine 1340 is glycosylated (N-linked (GlcNAc...) asparagine). Residues 1369 to 1602 enclose the ABC transporter 2 domain; the sequence is LVVKELSKVY…FGSGYSLQAK (234 aa). 1404 to 1411 provides a ligand contact to ATP; the sequence is GLNGAGKT. The segment at 1690 to 1773 is disordered; sequence NIQQGQAALD…SQPPSEPVLL (84 aa). The segment covering 1700–1710 has biased composition (low complexity); it reads SSLSPSNSRPI. 2 stretches are compositionally biased toward pro residues: residues 1711 to 1740 and 1763 to 1773; these read SSPPSSPPSSPPSSPPSRPPSRPSQPPSRP and PSQPPSEPVLL.

This sequence belongs to the ABC transporter superfamily. ABCA family. Post-translationally, N-glycosylated.

The protein resides in the endoplasmic reticulum membrane. It localises to the cytoplasm. It carries out the reaction cholesterol(in) + ATP + H2O = cholesterol(out) + ADP + phosphate + H(+). Its function is as follows. Promotes cholesterol efflux from sperm which renders sperm capable of fertilization. Has also been shown to decrease levels of intracellular esterified neutral lipids including cholesteryl esters, fatty acid esters and triacylglycerols. The chain is ATP-binding cassette sub-family A member 17 from Rattus norvegicus (Rat).